Reading from the N-terminus, the 176-residue chain is NAD(P)H-quinone oxidoreductase subunit 6, chloroplastic (176 aa).

The next 5 helical transmembrane spans lie at 10-30 (FLLV…VLLT), 32-52 (PIYS…FYIP), 61-81 (AQLL…VMFM), 93-115 (WTVG…ITTI), and 152-172 (FFLP…GAIA).

The protein belongs to the complex I subunit 6 family. NDH is composed of at least 16 different subunits, 5 of which are encoded in the nucleus.

The protein resides in the plastid. It is found in the chloroplast thylakoid membrane. It carries out the reaction a plastoquinone + NADH + (n+1) H(+)(in) = a plastoquinol + NAD(+) + n H(+)(out). The catalysed reaction is a plastoquinone + NADPH + (n+1) H(+)(in) = a plastoquinol + NADP(+) + n H(+)(out). Its function is as follows. NDH shuttles electrons from NAD(P)H:plastoquinone, via FMN and iron-sulfur (Fe-S) centers, to quinones in the photosynthetic chain and possibly in a chloroplast respiratory chain. The immediate electron acceptor for the enzyme in this species is believed to be plastoquinone. Couples the redox reaction to proton translocation, and thus conserves the redox energy in a proton gradient. The sequence is that of NAD(P)H-quinone oxidoreductase subunit 6, chloroplastic (ndhG) from Vitis vinifera (Grape).